We begin with the raw amino-acid sequence, 288 residues long: Thymidylate synthase (288 aa).

Residues Arg21 and 150 to 151 contribute to the dUMP site; that span reads RR. Cys170 (nucleophile) is an active-site residue. Residues 191-194, Asn202, and 232-234 each bind dUMP; these read RSGD and HIY. A (6R)-5,10-methylene-5,6,7,8-tetrahydrofolate-binding site is contributed by Asp194. Ala287 is a binding site for (6R)-5,10-methylene-5,6,7,8-tetrahydrofolate.

It belongs to the thymidylate synthase family. Bacterial-type ThyA subfamily. As to quaternary structure, homodimer.

The protein localises to the cytoplasm. It catalyses the reaction dUMP + (6R)-5,10-methylene-5,6,7,8-tetrahydrofolate = 7,8-dihydrofolate + dTMP. It participates in pyrimidine metabolism; dTTP biosynthesis. Functionally, catalyzes the reductive methylation of 2'-deoxyuridine-5'-monophosphate (dUMP) to 2'-deoxythymidine-5'-monophosphate (dTMP) while utilizing 5,10-methylenetetrahydrofolate (mTHF) as the methyl donor and reductant in the reaction, yielding dihydrofolate (DHF) as a by-product. This enzymatic reaction provides an intracellular de novo source of dTMP, an essential precursor for DNA biosynthesis. In Mesoplasma florum (strain ATCC 33453 / NBRC 100688 / NCTC 11704 / L1) (Acholeplasma florum), this protein is Thymidylate synthase.